A 657-amino-acid chain; its full sequence is Threonine--tRNA ligase (657 aa).

Residues methionine 1–threonine 61 enclose the TGS domain. Residues aspartate 244–proline 549 are catalytic. Residues cysteine 349, histidine 400, and histidine 526 each contribute to the Zn(2+) site.

It belongs to the class-II aminoacyl-tRNA synthetase family. Homodimer. It depends on Zn(2+) as a cofactor.

The protein localises to the cytoplasm. The enzyme catalyses tRNA(Thr) + L-threonine + ATP = L-threonyl-tRNA(Thr) + AMP + diphosphate + H(+). In terms of biological role, catalyzes the attachment of threonine to tRNA(Thr) in a two-step reaction: L-threonine is first activated by ATP to form Thr-AMP and then transferred to the acceptor end of tRNA(Thr). Also edits incorrectly charged L-seryl-tRNA(Thr). This chain is Threonine--tRNA ligase, found in Hyphomonas neptunium (strain ATCC 15444).